A 123-amino-acid polypeptide reads, in one-letter code: UPF0102 protein VFMJ11_2324 (123 aa).

This sequence belongs to the UPF0102 family.

The chain is UPF0102 protein VFMJ11_2324 from Aliivibrio fischeri (strain MJ11) (Vibrio fischeri).